Here is a 752-residue protein sequence, read N- to C-terminus: DNA topoisomerase 4 subunit A (752 aa).

One can recognise a Topo IIA-type catalytic domain in the interval 31 to 494 (LPFIGDGLKP…EAKAMSEHDM (464 aa)). The O-(5'-phospho-DNA)-tyrosine intermediate role is filled by tyrosine 120. The tract at residues 472-492 (YGDDRRSPLREREEAKAMSEH) is disordered. A compositionally biased stretch (basic and acidic residues) spans 473-492 (GDDRRSPLREREEAKAMSEH).

It belongs to the type II topoisomerase GyrA/ParC subunit family. ParC type 1 subfamily. In terms of assembly, heterotetramer composed of ParC and ParE.

It is found in the cell membrane. It carries out the reaction ATP-dependent breakage, passage and rejoining of double-stranded DNA.. Its function is as follows. Topoisomerase IV is essential for chromosome segregation. It relaxes supercoiled DNA. Performs the decatenation events required during the replication of a circular DNA molecule. The protein is DNA topoisomerase 4 subunit A of Salmonella typhimurium (strain LT2 / SGSC1412 / ATCC 700720).